The chain runs to 974 residues: Receptor-like protein 7 (974 aa).

Residues 1 to 24 (MSFLIRSICFLILIPSFLITFVSA) form the signal peptide. Topologically, residues 25-930 (TQHLCHSDQK…EEEEEESFSW (906 aa)) are extracellular. N-linked (GlcNAc...) asparagine glycosylation is found at Asn-54 and Asn-90. LRR repeat units follow at residues 96 to 120 (LRHLRDLNLANNNFNNSPIPAEFDK), 122 to 145 (TGLERLDLSQSSLSGQIPINLLQL), 147 to 166 (KLVSLDLSSSDFFGDESFHY), 181 to 204 (LRNLRELDMSYVKISSEIPEEFSN), 206 to 229 (RSLRSLNLNGCNLFGEFPSSILLI), and 230 to 252 (PNLQSIDLGNNPNLRGNLPVFHE). Asn-253 is a glycosylation site (N-linked (GlcNAc...) asparagine). LRR repeat units lie at residues 254–277 (NSLLKLTILYTSFSGAIPDSISSL), 278–301 (KNLTSLTLSVSYFSGKIPFSLGNL), 302–325 (SHLSHLSLSSNNLIGEIPSSIGNL), 327–349 (QLTNFYVGGNKLSGNLPATLSNL), and 350–373 (TKLNTISLSSNQFTGSLPPSISQL). Asn-279 and Asn-300 each carry an N-linked (GlcNAc...) asparagine glycan. An N-linked (GlcNAc...) asparagine glycan is attached at Asn-348. Residues 374-396 (SKLKFFFADDNPFIGAILSPLLK) form an LRR 12; degenerate repeat. 18 LRR repeats span residues 397 to 422 (IPSLTRIHLSYNQLNDLVGIENIFML), 425 to 448 (LETFYIYHYNYTKVRPLDLNVFSS), 454 to 472 (TLYISRIPISTTNITSDFP), 473 to 495 (SNLEYLSLRSCNITDFPEFIRKG), 496 to 519 (RNLQILDLSNNKIKGQVPDWLWRM), 521 to 542 (TLNSVDLSNNSLSGFHVSVKAS), 544 to 570 (ESQLTSVDLSSNAFQGPLFLPSKSLRY), 572 to 589 (SGSNNNFTGKIPRSICGL), 590 to 616 (SSLEILDLSNNNLNGSLPWCLETLMSS), 618 to 638 (SDLDLRNNSLSGSLPEIFMNA), 639 to 662 (TKLRSLDVSHNRMEGKLPGSLTGC), 664 to 685 (SLEVLNVGSNRINDMFPFELNS), 687 to 712 (QKLQVLVLHSNKFHGTLHNVDGVWFG), 713 to 737 (FPQLQIIDVSHNDFFGILPSDYFMN), 785 to 809 (LTIYTAIDLSGNQLHGKIPDSIGLL), 810 to 833 (KELRILNMSSNGFTGHIPSSLANL), 834 to 857 (KNLESLDISQNNISGEIPPELGTL), and 859 to 882 (SLAWINVSHNQLVGSIPQGTQFQR). 3 N-linked (GlcNAc...) asparagine glycosylation sites follow: Asn-434, Asn-466, and Asn-484. Asn-529 carries an N-linked (GlcNAc...) asparagine glycan. Asn-577, Asn-603, Asn-624, and Asn-637 each carry an N-linked (GlcNAc...) asparagine glycan. A glycan (N-linked (GlcNAc...) asparagine) is linked at Asn-737. N-linked (GlcNAc...) asparagine glycosylation is found at Asn-816, Asn-845, and Asn-864. Residues 899–923 (LENVCGHIKESTPTQTEPLETKEEE) form a disordered region. A helical membrane pass occupies residues 931 to 951 (IAAGLGFAPGVVFGLAMGYIV). The Cytoplasmic portion of the chain corresponds to 952–974 (VSYKHQWFMKTFGRSKQQNTRTR).

The protein belongs to the RLP family.

The protein resides in the cell membrane. This chain is Receptor-like protein 7, found in Arabidopsis thaliana (Mouse-ear cress).